The following is a 268-amino-acid chain: MTLLNIAVAGSTGRMGRTIMETIADAQDLRLSAALEQPDSPYLSQDAGGLTGTPCGVIINSDYASALTGSDVLIDFTRPAGTLTHLAVCRQSGIHMVIGTTGFSAEEKEIIHDAAKDIAIVFAPNMSVGVNILFRLLEVAAKALPAGYDVEIIEAHHRHKVDAPSGTALRMGEVIAQTQGKNLEKVAIYGREGHTGERAADTIGFSTIRGGDIVGDHTALFAGIGERLEITHKASSRKTFATGALHAARFLATKKSGLFDMQDVLGLR.

Residues 10-15 (GSTGRM), Glu-36, 99-101 (GTT), and 123-126 (APNM) each bind NAD(+). The active-site Proton donor/acceptor is the His-156. His-157 serves as a coordination point for (S)-2,3,4,5-tetrahydrodipicolinate. The active-site Proton donor is the Lys-160. Residue 166 to 167 (GT) participates in (S)-2,3,4,5-tetrahydrodipicolinate binding.

Belongs to the DapB family.

It localises to the cytoplasm. It carries out the reaction (S)-2,3,4,5-tetrahydrodipicolinate + NAD(+) + H2O = (2S,4S)-4-hydroxy-2,3,4,5-tetrahydrodipicolinate + NADH + H(+). It catalyses the reaction (S)-2,3,4,5-tetrahydrodipicolinate + NADP(+) + H2O = (2S,4S)-4-hydroxy-2,3,4,5-tetrahydrodipicolinate + NADPH + H(+). Its pathway is amino-acid biosynthesis; L-lysine biosynthesis via DAP pathway; (S)-tetrahydrodipicolinate from L-aspartate: step 4/4. Its function is as follows. Catalyzes the conversion of 4-hydroxy-tetrahydrodipicolinate (HTPA) to tetrahydrodipicolinate. The polypeptide is 4-hydroxy-tetrahydrodipicolinate reductase (Nitrosomonas eutropha (strain DSM 101675 / C91 / Nm57)).